Reading from the N-terminus, the 200-residue chain is Holliday junction branch migration complex subunit RuvA (200 aa).

Residues 1-63 (MIASVRGVVT…EDSLTLYGFA (63 aa)) form a domain I region. Residues 64–142 (DDDAKALFEL…PVPVGADSAA (79 aa)) are domain II. Positions 143–151 (GVTTGAWPE) are flexible linker. A domain III region spans residues 151–200 (EQVRQALVGLGWTAAQADQAVTAVAETVDGAVPPVPVLLRQAIRLLGRTR).

It belongs to the RuvA family. Homotetramer. Forms an RuvA(8)-RuvB(12)-Holliday junction (HJ) complex. HJ DNA is sandwiched between 2 RuvA tetramers; dsDNA enters through RuvA and exits via RuvB. An RuvB hexamer assembles on each DNA strand where it exits the tetramer. Each RuvB hexamer is contacted by two RuvA subunits (via domain III) on 2 adjacent RuvB subunits; this complex drives branch migration. In the full resolvosome a probable DNA-RuvA(4)-RuvB(12)-RuvC(2) complex forms which resolves the HJ.

The protein localises to the cytoplasm. Functionally, the RuvA-RuvB-RuvC complex processes Holliday junction (HJ) DNA during genetic recombination and DNA repair, while the RuvA-RuvB complex plays an important role in the rescue of blocked DNA replication forks via replication fork reversal (RFR). RuvA specifically binds to HJ cruciform DNA, conferring on it an open structure. The RuvB hexamer acts as an ATP-dependent pump, pulling dsDNA into and through the RuvAB complex. HJ branch migration allows RuvC to scan DNA until it finds its consensus sequence, where it cleaves and resolves the cruciform DNA. This is Holliday junction branch migration complex subunit RuvA from Salinispora tropica (strain ATCC BAA-916 / DSM 44818 / JCM 13857 / NBRC 105044 / CNB-440).